The following is a 246-amino-acid chain: 14-3-3 protein eta (246 aa).

N-acetylglycine is present on Gly-2. Ser-25 and Ser-59 each carry phosphoserine.

It belongs to the 14-3-3 family. In terms of assembly, homodimer. Interacts with many nuclear hormone receptors and cofactors including AR, ESR1, ESR2, MC2R, NR3C1, NRIP1, PPARBP and THRA. Interacts with ABL1 (phosphorylated form); the interaction retains it in the cytoplasm. Weakly interacts with CDKN1B. Interacts with ARHGEF28 and CDK16. Interacts with GAB2. Interacts with KCNK18 in a phosphorylation-dependent manner. Interacts with SAMSN1. Interacts with the 'Ser-241' phosphorylated form of PDPK1. Interacts with the 'Thr-369' phosphorylated form of DAPK2. Interacts with PI4KB, TBC1D22A and TBC1D22B. Interacts with SLITRK1. Interacts with MEFV. In terms of processing, phosphorylated on Ser-59 by protein kinase C delta type catalytic subunit in a sphingosine-dependent fashion.

The protein localises to the cytoplasm. Its function is as follows. Adapter protein implicated in the regulation of a large spectrum of both general and specialized signaling pathways. Binds to a large number of partners, usually by recognition of a phosphoserine or phosphothreonine motif. Binding generally results in the modulation of the activity of the binding partner. Negatively regulates the kinase activity of PDPK1. The protein is 14-3-3 protein eta (YWHAH) of Bos taurus (Bovine).